We begin with the raw amino-acid sequence, 1031 residues long: Sister chromatid cohesion 1 protein 4 (1031 aa).

The segment at 461-481 (TPDKEDPGTCNDDAGNNNITG) is disordered. The short motif at 545–552 (TKRLRSAP) is the Nuclear localization signal element. Disordered regions lie at residues 661–703 (VEEN…EELK), 742–772 (EKLDRVEDLQVEESHENHDGEGGQDVCADPN), and 803–835 (ELPHEDEKTDASAEVSELGRDDQTPCDNTVGST). Composition is skewed to basic and acidic residues over residues 742 to 762 (EKLDRVEDLQVEESHENHDGE) and 803 to 825 (ELPHEDEKTDASAEVSELGRDDQ).

This sequence belongs to the rad21 family. Component of the cohesin complex. Expressed in tissues containing dividing cells such as seedlings, flower buds, flowers and inflorescence meristem tissue.

It localises to the nucleus. The protein resides in the chromosome. Its subcellular location is the centromere. Its function is as follows. Involved in sister chromatid and centromere cohesion during mitosis. The protein is Sister chromatid cohesion 1 protein 4 (SYN4) of Arabidopsis thaliana (Mouse-ear cress).